The sequence spans 447 residues: MNKNTWVIGFTLFAMFFGAGNLIFPPNLGLDSGQFFWPAILAFVLTGIGLPLLGVIVGALDKEGYIGALNKISPKFSILFLIIIYLTIGPLFAIPRTASTSFEMTITPIIHSNSSIALFIFTIIYFIVVLYICLNPSKLIDRIGSLLTPLLLITILAMIIKAYLDFSGNSAGKGNEALYHSNFSSFAEGFTQGYLTMDAIAAIAFSMIVVNAVKLTGITKTNQIFKQTLTAGLIAAIALIFIYISLGYIGNHMPVSDMKLNELKSHDRNIGTYLLTTMASTGFGSFGKYLLGIIVALACLTTACGLIVAVSEYFHRIVPKVSYKAFVLVFILMSFIIANQGLNAVISMSIPVLSIVYPVAITVVLLILIAKFIPTKRITQQIPVIIVFILSIFSVISKLGWLKINFIESLPLRAYSLEWFPVAIIATILGYLVGIFVKQDPIKYQQE.

Helical transmembrane passes span 6–26 (WVIG…IFPP), 40–60 (ILAF…VGAL), 74–94 (PKFS…LFAI), 114–134 (SSIA…YICL), 143–163 (IGSL…IKAY), 193–213 (GYLT…VNAV), 229–249 (LTAG…LGYI), 290–310 (LLGI…IVAV), 326–346 (FVLV…NAVI), 350–370 (IPVL…ILIA), 382–402 (IPVI…LGWL), and 417–437 (LEWF…GIFV).

Belongs to the branched chain amino acid transporter family.

It localises to the cell membrane. In terms of biological role, component of the transport system for branched-chain amino acids (leucine, isoleucine and valine), which is coupled to a proton motive force (Potential). Contributes to NaCl tolerance. This chain is Putative branched-chain amino acid carrier protein SAR1419, found in Staphylococcus aureus (strain MRSA252).